The following is a 199-amino-acid chain: Recombination protein RecR (199 aa).

The C4-type zinc finger occupies 58 to 73; the sequence is CKTCGNIDTQSPCTVC. Residues 81-176 enclose the Toprim domain; it reads AMIVVVADVA…KVTRLAHGVP (96 aa).

It belongs to the RecR family.

May play a role in DNA repair. It seems to be involved in an RecBC-independent recombinational process of DNA repair. It may act with RecF and RecO. In Bradyrhizobium sp. (strain ORS 278), this protein is Recombination protein RecR.